Here is a 122-residue protein sequence, read N- to C-terminus: Probable glycine cleavage system H protein (122 aa).

A Lipoyl-binding domain is found at 23-104; sequence IATVGITDYA…PYGNWLVKMK (82 aa). K64 carries the N6-lipoyllysine modification.

The protein belongs to the GcvH family. In terms of assembly, the glycine cleavage system is composed of four proteins: P, T, L and H. It depends on (R)-lipoate as a cofactor.

The glycine cleavage system catalyzes the degradation of glycine. The H protein shuttles the methylamine group of glycine from the P protein to the T protein. The chain is Probable glycine cleavage system H protein from Thermoplasma volcanium (strain ATCC 51530 / DSM 4299 / JCM 9571 / NBRC 15438 / GSS1).